A 453-amino-acid polypeptide reads, in one-letter code: Homeobox protein meis3 (453 aa).

The tract at residues 33-64 is disordered; sequence HHSLSQSAPYGSTGAAHRVPMPPGMGSNDGLK. An MEIS N-terminal domain is found at 102-185; the sequence is GGDVCSSDSF…PIDLVIDDRD (84 aa). A disordered region spans residues 192 to 272; it reads LEDFTGSCTS…RDKKRNKKRG (81 aa). The span at 197-209 shows a compositional bias: polar residues; the sequence is GSCTSLSDQNNSW. A compositionally biased stretch (low complexity) spans 218-230; that stretch reads STHSGTPGPSSGG. Residues 231-242 are compositionally biased toward polar residues; the sequence is LASQSGDNSSEQ. The segment at residues 267 to 329 is a DNA-binding region (homeobox); the sequence is RNKKRGIFPK…NARRRIVQPM (63 aa).

It belongs to the TALE/MEIS homeobox family.

Its subcellular location is the nucleus. In terms of biological role, a caudalizing protein which is required to pattern the anterior/posterior (A/P) axis during central nervous system (CNS) formation. Inhibits anterior neural expression and acts as a transcriptional activator to induce posterior neural gene expression. Maintains a proper A/P balance required for hindbrain formation by activating the FGF/MAPK pathway, which modulates the planar cell polarity (PCP) pathway. Interacts with retinoid signaling during hindbrain patterning. This is Homeobox protein meis3 from Xenopus tropicalis (Western clawed frog).